Here is a 450-residue protein sequence, read N- to C-terminus: UDP-N-acetylmuramoylalanine--D-glutamate ligase (450 aa).

119-125 (GSNGKTT) is an ATP binding site.

The protein belongs to the MurCDEF family.

The protein localises to the cytoplasm. The catalysed reaction is UDP-N-acetyl-alpha-D-muramoyl-L-alanine + D-glutamate + ATP = UDP-N-acetyl-alpha-D-muramoyl-L-alanyl-D-glutamate + ADP + phosphate + H(+). The protein operates within cell wall biogenesis; peptidoglycan biosynthesis. In terms of biological role, cell wall formation. Catalyzes the addition of glutamate to the nucleotide precursor UDP-N-acetylmuramoyl-L-alanine (UMA). In Streptococcus pneumoniae (strain CGSP14), this protein is UDP-N-acetylmuramoylalanine--D-glutamate ligase.